We begin with the raw amino-acid sequence, 944 residues long: Valine--tRNA ligase (944 aa).

Positions Pro43–His53 match the 'HIGH' region motif. The 'KMSKS' region motif lies at Lys550–Ser554. Lys553 provides a ligand contact to ATP. A coiled-coil region spans residues Leu878 to Leu944.

Belongs to the class-I aminoacyl-tRNA synthetase family. ValS type 1 subfamily. As to quaternary structure, monomer.

It is found in the cytoplasm. The catalysed reaction is tRNA(Val) + L-valine + ATP = L-valyl-tRNA(Val) + AMP + diphosphate. Functionally, catalyzes the attachment of valine to tRNA(Val). As ValRS can inadvertently accommodate and process structurally similar amino acids such as threonine, to avoid such errors, it has a 'posttransfer' editing activity that hydrolyzes mischarged Thr-tRNA(Val) in a tRNA-dependent manner. The protein is Valine--tRNA ligase of Xanthomonas campestris pv. campestris (strain B100).